We begin with the raw amino-acid sequence, 192 residues long: A-type ATP synthase subunit E (192 aa).

It belongs to the V-ATPase E subunit family. As to quaternary structure, has multiple subunits with at least A(3), B(3), C, D, E, F, H, I and proteolipid K(x).

Its subcellular location is the cell membrane. Component of the A-type ATP synthase that produces ATP from ADP in the presence of a proton gradient across the membrane. The sequence is that of A-type ATP synthase subunit E from Methanoculleus marisnigri (strain ATCC 35101 / DSM 1498 / JR1).